A 591-amino-acid polypeptide reads, in one-letter code: Aspartate--tRNA ligase (591 aa).

L-aspartate is bound at residue Glu-173. The interval 197–200 (QLFK) is aspartate. Arg-219 contributes to the L-aspartate binding site. Residues 219 to 221 (RDE) and Gln-228 each bind ATP. His-448 contributes to the L-aspartate binding site. An ATP-binding site is contributed by Glu-482. Arg-489 serves as a coordination point for L-aspartate. 534-537 (GLDR) provides a ligand contact to ATP.

The protein belongs to the class-II aminoacyl-tRNA synthetase family. Type 1 subfamily. As to quaternary structure, homodimer.

Its subcellular location is the cytoplasm. The catalysed reaction is tRNA(Asp) + L-aspartate + ATP = L-aspartyl-tRNA(Asp) + AMP + diphosphate. Its function is as follows. Catalyzes the attachment of L-aspartate to tRNA(Asp) in a two-step reaction: L-aspartate is first activated by ATP to form Asp-AMP and then transferred to the acceptor end of tRNA(Asp). The protein is Aspartate--tRNA ligase of Shewanella frigidimarina (strain NCIMB 400).